A 930-amino-acid polypeptide reads, in one-letter code: Protein ARABIDILLO 1 (930 aa).

Positions 3 to 8 (RRVRRK) match the Nuclear localization signal motif. The F-box domain occupies 44–90 (FVDWISLPYDTVLQLFTCLNYRDRASLASTCKTWRCLGASSCLWTSL). 13 ARM repeats span residues 172–212 (RITS…KHCP), 244–285 (TSNI…TSSQ), 379–418 (PEGL…TFVV), 428–467 (CGRA…NLSV), 469–508 (ANIA…NLSV), 510–552 (EEHK…NLAA), 554–594 (DKCS…NLAA), 600–639 (NNNA…NLSF), 641–683 (DKNR…GLSV), 685–724 (EANS…NLAF), 726–766 (PGNA…YMFD), 790–831 (LDGA…QVTE), and 835–875 (IQEA…QFTI).

It belongs to the beta-catenin family. Interacts with SNL1. Interacts with MYB53, MYB92 and MYB93. In terms of tissue distribution, expressed ubiquitously, with higher levels in root tip, pericycle and vasculature.

It localises to the nucleus. Its function is as follows. Promotes lateral root initiation and development, independently of auxin (IAA) and abscisis acid (ABA). The sequence is that of Protein ARABIDILLO 1 (FBX5) from Arabidopsis thaliana (Mouse-ear cress).